Reading from the N-terminus, the 47-residue chain is Trifunctional NAD biosynthesis/regulator protein NadR (47 aa).

The region spanning 7-47 (LKSAIKQKGCTLDEVAEPSGMTKGYLSQLLNRKIKARARRS) is the HTH cro/C1-type domain. The H-T-H motif DNA-binding region spans 18 to 37 (LDEVAEPSGMTKGYLSQLLN).

It is found in the cell membrane. The protein localises to the cytoplasm. The enzyme catalyses beta-nicotinamide D-ribonucleotide + ATP + H(+) = diphosphate + NAD(+). It carries out the reaction beta-nicotinamide D-riboside + ATP = beta-nicotinamide D-ribonucleotide + ADP + H(+). Its pathway is cofactor biosynthesis; NAD(+) biosynthesis [regulation]. It functions in the pathway cofactor biosynthesis; NAD(+) biosynthesis; NAD(+) from nicotinamide D-ribonucleotide: step 1/1. Its function is as follows. This enzyme has three activities: DNA binding, nicotinamide mononucleotide (NMN) adenylyltransferase and ribosylnicotinamide (RN) kinase. The DNA-binding domain binds to the nadB operator sequence in an NAD- and ATP-dependent manner. As NAD levels increase within the cell, the affinity of NadR for the nadB operator regions of nadA, nadB, and pncB increases, repressing the transcription of these genes. The RN kinase activity catalyzes the phosphorylation of RN to form nicotinamide ribonucleotide. The NMN adenylyltransferase activity catalyzes the transfer of the AMP moiety of ATP to nicotinamide ribonucleotide to form NAD(+). The NMN adenylyltransferase domain also functions as the NAD and ATP sensor. The protein is Trifunctional NAD biosynthesis/regulator protein NadR (nadR) of Klebsiella pneumoniae.